We begin with the raw amino-acid sequence, 542 residues long: 1-aminocyclopropane-1-carboxylate synthase 6 (542 aa).

The segment at 1–28 is disordered; that stretch reads MRRSGNGGAAKKKKKRSASAASERRPRA. The residue at position 379 (Lys-379) is an N6-(pyridoxal phosphate)lysine.

This sequence belongs to the class-I pyridoxal-phosphate-dependent aminotransferase family. The cofactor is pyridoxal 5'-phosphate. Expressed in leaves.

The protein resides in the plastid. The protein localises to the amyloplast membrane. It carries out the reaction S-adenosyl-L-methionine = 1-aminocyclopropane-1-carboxylate + S-methyl-5'-thioadenosine + H(+). It functions in the pathway alkene biosynthesis; ethylene biosynthesis via S-adenosyl-L-methionine; ethylene from S-adenosyl-L-methionine: step 1/2. In terms of biological role, catalyzes the formation of 1-aminocyclopropane-1-carboxylate, a direct precursor of ethylene in higher plants. Required for the regulation of starch grain size in endosperm. This Oryza sativa subsp. japonica (Rice) protein is 1-aminocyclopropane-1-carboxylate synthase 6.